The following is a 450-amino-acid chain: tRNA-2-methylthio-N(6)-dimethylallyladenosine synthase (450 aa).

The MTTase N-terminal domain occupies 8–124; the sequence is RTLHITTWGC…LPELIAEIEA (117 aa). Cys17, Cys52, Cys87, Cys162, Cys166, and Cys169 together coordinate [4Fe-4S] cluster. One can recognise a Radical SAM core domain in the interval 148 to 380; the sequence is ASQGPIAFLA…QAVLRDQQHA (233 aa). Residues 383-445 enclose the TRAM domain; the sequence is RAQVGRSFEV…PNSLMASLTQ (63 aa).

It belongs to the methylthiotransferase family. MiaB subfamily. As to quaternary structure, monomer. The cofactor is [4Fe-4S] cluster.

The protein resides in the cytoplasm. It catalyses the reaction N(6)-dimethylallyladenosine(37) in tRNA + (sulfur carrier)-SH + AH2 + 2 S-adenosyl-L-methionine = 2-methylsulfanyl-N(6)-dimethylallyladenosine(37) in tRNA + (sulfur carrier)-H + 5'-deoxyadenosine + L-methionine + A + S-adenosyl-L-homocysteine + 2 H(+). In terms of biological role, catalyzes the methylthiolation of N6-(dimethylallyl)adenosine (i(6)A), leading to the formation of 2-methylthio-N6-(dimethylallyl)adenosine (ms(2)i(6)A) at position 37 in tRNAs that read codons beginning with uridine. The chain is tRNA-2-methylthio-N(6)-dimethylallyladenosine synthase from Acidiphilium cryptum (strain JF-5).